The primary structure comprises 624 residues: tRNA uridine 5-carboxymethylaminomethyl modification enzyme MnmG (624 aa).

FAD is bound by residues 13–18 (GGGHAG), Val125, and Ser180. 273–287 (GPRYCPSIEDKIVRF) serves as a coordination point for NAD(+). Gln370 is a binding site for FAD.

It belongs to the MnmG family. Homodimer. Heterotetramer of two MnmE and two MnmG subunits. Requires FAD as cofactor.

It is found in the cytoplasm. In terms of biological role, NAD-binding protein involved in the addition of a carboxymethylaminomethyl (cmnm) group at the wobble position (U34) of certain tRNAs, forming tRNA-cmnm(5)s(2)U34. This chain is tRNA uridine 5-carboxymethylaminomethyl modification enzyme MnmG, found in Legionella pneumophila (strain Paris).